The sequence spans 615 residues: MLNRYPLWKYVMLIVVIVIGLLYALPNLFGEDPAVQITGARGVAASEQTLIQVQKTLQEEKITAKSVALEEGAILARFDSTDTQLRAREALMGVMGDKYVVALNLAPATPRWLAAIHAEPMKLGLDLRGGVHFLMEVDMDTALGKLQEQNIDSLRSDLREKGIPYTTVRKENNYGLSITFRDAKARDEAIAYLSKRHPDLVISSQGSNQLRAVMSDARLSEAREYAVQQNINILRNRVNQLGVAEPVVQRQGADRIVVELPGIQDTARAKEILGATATLEFRLVNTNVDQAAAASGRVPGDSEVKQTREGQPVVLYKRVILTGDHITDSTSSQDEYNQPQVNISLDSAGGNIMSNFTKDNIGKPMATLFVEYKDSGKKDANGRAVLVKQEEVINIANIQSRLGNSFRITGINNPNEARQLSLLLRAGALIAPIQIVEERTIGPTLGMQNIEQGLEACLAGLLVSILFMIIFYKKFGLIATSALIANLILIVGIMSLLPGATLSMPGIAGIVLTLAVAVDANVLINERIKEELSNGRTVQQAIDEGYRGAFSSIFDANITTLIKVIILYAVGTGAIKGFAITTGIGVATSMFTAIVGTRAIVNLLYGGKRVKKLSI.

6 helical membrane-spanning segments follow: residues 10–30 (YVMLIVVIVIGLLYALPNLFG), 452–472 (QGLEACLAGLLVSILFMIIFY), 477–497 (LIATSALIANLILIVGIMSLL), 504–524 (MPGIAGIVLTLAVAVDANVLI), 548–570 (GAFSSIFDANITTLIKVIILYAV), and 585–605 (GVATSMFTAIVGTRAIVNLLY).

Belongs to the SecD/SecF family. SecD subfamily. In terms of assembly, forms a complex with SecF. Part of the essential Sec protein translocation apparatus which comprises SecA, SecYEG and auxiliary proteins SecDF-YajC and YidC.

It is found in the cell inner membrane. Part of the Sec protein translocase complex. Interacts with the SecYEG preprotein conducting channel. SecDF uses the proton motive force (PMF) to complete protein translocation after the ATP-dependent function of SecA. In Shigella flexneri, this protein is Protein translocase subunit SecD.